Consider the following 302-residue polypeptide: Bifunctional protein FolD (302 aa).

NADP(+) contacts are provided by residues 165 to 167 (GRS), serine 190, and isoleucine 231.

Belongs to the tetrahydrofolate dehydrogenase/cyclohydrolase family. Homodimer.

The catalysed reaction is (6R)-5,10-methylene-5,6,7,8-tetrahydrofolate + NADP(+) = (6R)-5,10-methenyltetrahydrofolate + NADPH. It catalyses the reaction (6R)-5,10-methenyltetrahydrofolate + H2O = (6R)-10-formyltetrahydrofolate + H(+). Its pathway is one-carbon metabolism; tetrahydrofolate interconversion. In terms of biological role, catalyzes the oxidation of 5,10-methylenetetrahydrofolate to 5,10-methenyltetrahydrofolate and then the hydrolysis of 5,10-methenyltetrahydrofolate to 10-formyltetrahydrofolate. The chain is Bifunctional protein FolD from Prochlorococcus marinus (strain MIT 9211).